A 408-amino-acid polypeptide reads, in one-letter code: Dual-specificity RNA methyltransferase RlmN (408 aa).

Catalysis depends on E126, which acts as the Proton acceptor. The region spanning 132–373 (EEGRGTLCLS…NQAGYASPIR (242 aa)) is the Radical SAM core domain. C139 and C384 are oxidised to a cystine. Residues C146, C150, and C153 each contribute to the [4Fe-4S] cluster site. S-adenosyl-L-methionine is bound by residues 210-211 (GE), S242, 264-266 (SLH), and N341. The active-site S-methylcysteine intermediate is C384.

The protein belongs to the radical SAM superfamily. RlmN family. [4Fe-4S] cluster serves as cofactor.

The protein resides in the cytoplasm. The enzyme catalyses adenosine(2503) in 23S rRNA + 2 reduced [2Fe-2S]-[ferredoxin] + 2 S-adenosyl-L-methionine = 2-methyladenosine(2503) in 23S rRNA + 5'-deoxyadenosine + L-methionine + 2 oxidized [2Fe-2S]-[ferredoxin] + S-adenosyl-L-homocysteine. The catalysed reaction is adenosine(37) in tRNA + 2 reduced [2Fe-2S]-[ferredoxin] + 2 S-adenosyl-L-methionine = 2-methyladenosine(37) in tRNA + 5'-deoxyadenosine + L-methionine + 2 oxidized [2Fe-2S]-[ferredoxin] + S-adenosyl-L-homocysteine. Specifically methylates position 2 of adenine 2503 in 23S rRNA and position 2 of adenine 37 in tRNAs. m2A2503 modification seems to play a crucial role in the proofreading step occurring at the peptidyl transferase center and thus would serve to optimize ribosomal fidelity. This Bartonella henselae (strain ATCC 49882 / DSM 28221 / CCUG 30454 / Houston 1) (Rochalimaea henselae) protein is Dual-specificity RNA methyltransferase RlmN.